Here is a 95-residue protein sequence, read N- to C-terminus: Acylphosphatase (95 aa).

Residues cysteine 7–tyrosine 95 form the Acylphosphatase-like domain. Active-site residues include arginine 22 and asparagine 40.

The protein belongs to the acylphosphatase family.

The enzyme catalyses an acyl phosphate + H2O = a carboxylate + phosphate + H(+). The sequence is that of Acylphosphatase (acyP) from Klebsiella pneumoniae subsp. pneumoniae (strain ATCC 700721 / MGH 78578).